We begin with the raw amino-acid sequence, 595 residues long: Aspartate--tRNA(Asp/Asn) ligase (595 aa).

E175 contacts L-aspartate. An aspartate region spans residues 199-202; the sequence is QQYK. L-aspartate is bound by residues R221 and H454. 221–223 serves as a coordination point for ATP; sequence RDE. E488 serves as a coordination point for ATP. Position 495 (R495) interacts with L-aspartate. Position 540 to 543 (540 to 543) interacts with ATP; sequence GIDR.

It belongs to the class-II aminoacyl-tRNA synthetase family. Type 1 subfamily. Homodimer.

It localises to the cytoplasm. It carries out the reaction tRNA(Asx) + L-aspartate + ATP = L-aspartyl-tRNA(Asx) + AMP + diphosphate. Functionally, aspartyl-tRNA synthetase with relaxed tRNA specificity since it is able to aspartylate not only its cognate tRNA(Asp) but also tRNA(Asn). Reaction proceeds in two steps: L-aspartate is first activated by ATP to form Asp-AMP and then transferred to the acceptor end of tRNA(Asp/Asn). This is Aspartate--tRNA(Asp/Asn) ligase from Rhizobium meliloti (strain 1021) (Ensifer meliloti).